A 572-amino-acid chain; its full sequence is Phosphoglucomutase-1 (572 aa).

Substrate contacts are provided by residues T23, R27, 120 to 121 (SH), and K133. The Phosphoserine intermediate role is filled by S120. S120 lines the Mg(2+) pocket. Residues D288, D290, and D292 each coordinate Mg(2+). Substrate is bound by residues 292 to 293 (DR), T356, 375 to 377 (EES), K388, and R524.

This sequence belongs to the phosphohexose mutase family. The cofactor is Mg(2+).

Its subcellular location is the cytoplasm. The enzyme catalyses alpha-D-glucose 1-phosphate = alpha-D-glucose 6-phosphate. Functionally, this enzyme participates in both the breakdown and synthesis of glucose. In Dictyostelium discoideum (Social amoeba), this protein is Phosphoglucomutase-1 (pgmA).